The primary structure comprises 178 residues: Oligoribonuclease (178 aa).

The Exonuclease domain maps to 7–168 (LIWIDLEMTG…DDIRESIAEL (162 aa)). The active site involves Tyr128.

The protein belongs to the oligoribonuclease family.

It localises to the cytoplasm. 3'-to-5' exoribonuclease specific for small oligoribonucleotides. In Pseudomonas syringae pv. tomato (strain ATCC BAA-871 / DC3000), this protein is Oligoribonuclease.